The sequence spans 225 residues: Histone H1.11L (225 aa).

2 stretches are compositionally biased toward low complexity: residues 1–23 (MSETAPAPAAEAAPAAAPAPAKA) and 31–43 (AAGGAKARKPAGP). Disordered stretches follow at residues 1-46 (MSET…PSVT) and 94-225 (SKGT…AKKK). Serine 2 is modified (N-acetylserine). The H15 domain occupies 41–114 (AGPSVTELIT…GASGSFRLSK (74 aa)). Composition is skewed to basic residues over residues 123–138 (APKKKASAAKPKKPAA), 146–163 (KKPKKAVAVKKSPKKAKK), 171–189 (KSAKSPKKVTKAVKPKKAV), and 198–225 (KAVKPKAAKPKAAKPKAAKAKKAAAKKK).

It belongs to the histone H1/H5 family.

The protein localises to the nucleus. The protein resides in the chromosome. Functionally, histones H1 are necessary for the condensation of nucleosome chains into higher-order structures. The chain is Histone H1.11L from Gallus gallus (Chicken).